Consider the following 290-residue polypeptide: ATP synthase gamma chain (290 aa).

It belongs to the ATPase gamma chain family. As to quaternary structure, F-type ATPases have 2 components, CF(1) - the catalytic core - and CF(0) - the membrane proton channel. CF(1) has five subunits: alpha(3), beta(3), gamma(1), delta(1), epsilon(1). CF(0) has four main subunits: a, b, b' and c.

The protein localises to the cellular chromatophore membrane. Produces ATP from ADP in the presence of a proton gradient across the membrane. The gamma chain is believed to be important in regulating ATPase activity and the flow of protons through the CF(0) complex. The chain is ATP synthase gamma chain from Rhodobacter capsulatus (Rhodopseudomonas capsulata).